Reading from the N-terminus, the 875-residue chain is Alanine--tRNA ligase (875 aa).

Residues His-564, His-568, Cys-666, and His-670 each contribute to the Zn(2+) site.

This sequence belongs to the class-II aminoacyl-tRNA synthetase family. Homotetramer. The cofactor is Zn(2+).

The protein localises to the cytoplasm. The catalysed reaction is tRNA(Ala) + L-alanine + ATP = L-alanyl-tRNA(Ala) + AMP + diphosphate. Catalyzes the attachment of alanine to tRNA(Ala) in a two-step reaction: alanine is first activated by ATP to form Ala-AMP and then transferred to the acceptor end of tRNA(Ala). Also edits incorrectly charged Ser-tRNA(Ala) and Gly-tRNA(Ala) via its editing domain. This Serratia proteamaculans (strain 568) protein is Alanine--tRNA ligase.